The following is a 476-amino-acid chain: ATP synthase subunit beta (476 aa).

154 to 161 (GGAGVGKT) is an ATP binding site.

This sequence belongs to the ATPase alpha/beta chains family. In terms of assembly, F-type ATPases have 2 components, CF(1) - the catalytic core - and CF(0) - the membrane proton channel. CF(1) has five subunits: alpha(3), beta(3), gamma(1), delta(1), epsilon(1). CF(0) has three main subunits: a(1), b(2) and c(9-12). The alpha and beta chains form an alternating ring which encloses part of the gamma chain. CF(1) is attached to CF(0) by a central stalk formed by the gamma and epsilon chains, while a peripheral stalk is formed by the delta and b chains.

Its subcellular location is the cell inner membrane. It catalyses the reaction ATP + H2O + 4 H(+)(in) = ADP + phosphate + 5 H(+)(out). Functionally, produces ATP from ADP in the presence of a proton gradient across the membrane. The catalytic sites are hosted primarily by the beta subunits. This is ATP synthase subunit beta from Nitrobacter winogradskyi (strain ATCC 25391 / DSM 10237 / CIP 104748 / NCIMB 11846 / Nb-255).